The sequence spans 308 residues: Oligopeptide transport system permease protein AmiD (308 aa).

The next 6 helical transmembrane spans lie at 43 to 63, 111 to 131, 145 to 167, 171 to 193, 234 to 254, and 274 to 294; these read TVVMLGILVAIILISFIYPMF, ILISVIATVINLVIGVFVGGI, VYNVISNIPPLLIVIVLTYSIGA, NLIFAMSVTTWIGIAFMIRVQIL, MLPSFISYEAFLSFFGLGLPI, and AYLFWIPLTTLVLVSLSLFVV. The ABC transmembrane type-1 domain maps to 107 to 295; sequence ARNSILISVI…LVSLSLFVVG (189 aa).

It belongs to the binding-protein-dependent transport system permease family. OppBC subfamily.

The protein localises to the cell membrane. In terms of biological role, part of the binding-protein-dependent transport system for oligopeptides; probably responsible for the translocation of the substrate across the membrane. The chain is Oligopeptide transport system permease protein AmiD (amiD) from Streptococcus pneumoniae (strain ATCC BAA-255 / R6).